The chain runs to 421 residues: Aspartokinase (421 aa).

Residue 7–10 coordinates ATP; the sequence is KYGG. Substrate is bound at residue 25-30; sequence RIVATK. ATP is bound at residue serine 41. Substrate is bound by residues 45-49, glutamate 74, 125-126, 151-154, and serine 154; these read DTTDD, LE, and RGGS. ATP-binding positions include 174–175, 180–185, and lysine 210; these read TD and FSADPR. ACT domains lie at 267–348 and 349–421; these read VTIV…GKVS and LIGA…GTGR. Substrate-binding positions include aspartate 274, 274-279, 292-294, glutamine 298, 360-361, 374-375, and 381-382; these read DIPGYA, NID, VT, NI, and SE.

Belongs to the aspartokinase family. Heterotetramer consisting of 2 isoforms Alpha (catalytic and regulation) and of a homodimer of 2 isoforms Beta (regulation).

It carries out the reaction L-aspartate + ATP = 4-phospho-L-aspartate + ADP. Its pathway is amino-acid biosynthesis; L-lysine biosynthesis via DAP pathway; (S)-tetrahydrodipicolinate from L-aspartate: step 1/4. It participates in amino-acid biosynthesis; L-methionine biosynthesis via de novo pathway; L-homoserine from L-aspartate: step 1/3. The protein operates within amino-acid biosynthesis; L-threonine biosynthesis; L-threonine from L-aspartate: step 1/5. Its activity is regulated as follows. Feedback inhibition by lysine and threonine. Catalyzes the phosphorylation of the beta-carboxyl group of aspartic acid with ATP to yield 4-phospho-L-aspartate, which is involved in the branched biosynthetic pathway leading to the biosynthesis of amino acids lysine, threonine, isoleucine and methionine. This chain is Aspartokinase (ask), found in Mycobacterium bovis (strain ATCC BAA-935 / AF2122/97).